A 102-amino-acid chain; its full sequence is Small ribosomal subunit protein eS24 (102 aa).

Belongs to the eukaryotic ribosomal protein eS24 family.

The sequence is that of Small ribosomal subunit protein eS24 (rps24e) from Haloarcula marismortui (strain ATCC 43049 / DSM 3752 / JCM 8966 / VKM B-1809) (Halobacterium marismortui).